Here is a 300-residue protein sequence, read N- to C-terminus: MNTLVLKIDAILSKHLKKQLAPYTISSQNTYVAFAAKKNGVTVLLYKSGKLVLQGNGANALAQELNLPVAKTVFEASNNSQDIPIIGSDEVGNGSYFGGIAVVASFVDPKDHPFLKKLGVDDSKKLSDKTIQQIAPLLEKQIPHQSLLLSPKKYNELVGKSKPYNAISIKVALHNQAIFLLLQKGIQPKQIVIDAFTSQSNYEKHLKKEKNHFPNPLTFQEKAESHYLAVAVSSIIARNLFLDNLDQLGQDLGYQLPSGAGSASDKVASQLLAAYGMSSLEYSAKLHFANTHKAQALLTK.

The 218-residue stretch at 83-300 folds into the RNase H type-2 domain; the sequence is IPIIGSDEVG…THKAQALLTK (218 aa). A divalent metal cation-binding residues include Asp89, Glu90, and Asp194.

Belongs to the RNase HII family. RnhC subfamily. Requires Mn(2+) as cofactor. The cofactor is Mg(2+).

The protein resides in the cytoplasm. It catalyses the reaction Endonucleolytic cleavage to 5'-phosphomonoester.. Its function is as follows. Endonuclease that specifically degrades the RNA of RNA-DNA hybrids. This Streptococcus pyogenes serotype M2 (strain MGAS10270) protein is Ribonuclease HIII.